The sequence spans 252 residues: uncharacterized protein (252 aa).

Polar residues-rich tracts occupy residues 108–122 (RTTMRQGRFPSSSSE) and 136–153 (MPNTGASSSQDPFTNSQS). Residues 108-252 (RTTMRQGRFP…LIWNDSSSSK (145 aa)) are disordered. Positions 154-172 (TEKEDAMYSKDNGFEDRSK) are enriched in basic and acidic residues. Over residues 201 to 226 (VKSTDSAFSGQENSEAFPSRTSNLGS) the composition is skewed to polar residues.

It localises to the cytoplasm. Its subcellular location is the mitochondrion. The protein resides in the nucleus. This is an uncharacterized protein from Schizosaccharomyces pombe (strain 972 / ATCC 24843) (Fission yeast).